The chain runs to 340 residues: Small ribosomal subunit biogenesis GTPase RsgA (340 aa).

The segment covering 20–34 has biased composition (basic and acidic residues); the sequence is ERAERAERRARRDDT. The tract at residues 20 to 42 is disordered; sequence ERAERAERRARRDDTSLDAGDYG. The 159-residue stretch at 116 to 274 folds into the CP-type G domain; that stretch reads RGQLKPVAAN…LIDSPGIREF (159 aa). Residues 163 to 166 and 216 to 224 contribute to the GTP site; these read NKTD and GQSGVGKSS. Residues Cys-298, Cys-303, His-305, and Cys-311 each contribute to the Zn(2+) site.

It belongs to the TRAFAC class YlqF/YawG GTPase family. RsgA subfamily. As to quaternary structure, monomer. Associates with 30S ribosomal subunit, binds 16S rRNA. Zn(2+) is required as a cofactor.

The protein resides in the cytoplasm. Functionally, one of several proteins that assist in the late maturation steps of the functional core of the 30S ribosomal subunit. Helps release RbfA from mature subunits. May play a role in the assembly of ribosomal proteins into the subunit. Circularly permuted GTPase that catalyzes slow GTP hydrolysis, GTPase activity is stimulated by the 30S ribosomal subunit. This Chromohalobacter salexigens (strain ATCC BAA-138 / DSM 3043 / CIP 106854 / NCIMB 13768 / 1H11) protein is Small ribosomal subunit biogenesis GTPase RsgA.